The following is a 147-amino-acid chain: Hemoglobin subunit rho (147 aa).

Residues 3–147 form the Globin domain; it reads HWSAEEKQLI…VAHALAYKYH (145 aa). The heme b site is built by His-64 and His-93.

Belongs to the globin family.

In terms of biological role, the rho chain is the major early embryonic beta-type hemoglobin chain. This is Hemoglobin subunit rho from Gallus gallus (Chicken).